Consider the following 218-residue polypeptide: Flagellin B1 (218 aa).

The propeptide occupies 1–12 (MNIKEFLSNKKG). Asn-38, Asn-71, Asn-77, Asn-115, and Asn-136 each carry an N-linked (GlcNAc...) asparagine glycan.

The protein belongs to the archaeal flagellin family. In terms of processing, N-linked glycans consist of the 779 Da trisaccharide beta-ManNAc(Thr)-(1-4)-beta-GlcNAc3NAcA-(1-3)-beta-GlcNAc.

Its subcellular location is the archaeal flagellum. Flagellin is the subunit protein which polymerizes to form the filaments of archaeal flagella. This chain is Flagellin B1 (flaB1), found in Methanococcus voltae.